Here is a 627-residue protein sequence, read N- to C-terminus: uncharacterized protein (627 aa).

Disordered regions lie at residues 141-187 and 490-510; these read LRYP…TPPS and ENENTNGSANNSTYTNGGPRT. A compositionally biased stretch (polar residues) spans 491–510; that stretch reads NENTNGSANNSTYTNGGPRT. S559 carries the phosphoserine modification.

This is an uncharacterized protein from Saccharomyces cerevisiae (strain ATCC 204508 / S288c) (Baker's yeast).